A 119-amino-acid chain; its full sequence is Holo-[acyl-carrier-protein] synthase (119 aa).

Asp-8 and Glu-58 together coordinate Mg(2+).

The protein belongs to the P-Pant transferase superfamily. AcpS family. It depends on Mg(2+) as a cofactor.

It is found in the cytoplasm. It catalyses the reaction apo-[ACP] + CoA = holo-[ACP] + adenosine 3',5'-bisphosphate + H(+). Its function is as follows. Transfers the 4'-phosphopantetheine moiety from coenzyme A to a Ser of acyl-carrier-protein. This Streptococcus suis (strain 05ZYH33) protein is Holo-[acyl-carrier-protein] synthase.